A 165-amino-acid chain; its full sequence is Mating factor alpha-1 (165 aa).

A signal peptide (or 20) is located at residues 1–19; sequence MRFPSIFTAVLFAASSALA. 4 consecutive propeptides follow at residues 20 to 89, 105 to 110, 126 to 131, and 147 to 152; these read APVN…EAEA, EAEAEA, and EADAEA.

In terms of biological role, the active factor is excreted into the culture medium by haploid cells of the alpha mating type and acts on cells of the opposite mating type (type A). It mediates the conjugation process between the two types by inhibiting the initiation of DNA synthesis in type a cells and synchronizing them with type alpha. The chain is Mating factor alpha-1 (MF(ALPHA)1) from Saccharomyces cerevisiae (strain ATCC 204508 / S288c) (Baker's yeast).